A 75-amino-acid polypeptide reads, in one-letter code: U6-lycotoxin-Ls1d (75 aa).

The first 21 residues, 1–21 (MKLLFFTALVLVVISLIEVEA), serve as a signal peptide directing secretion. Residues 22 to 25 (ENER) constitute a propeptide that is removed on maturation.

Belongs to the neurotoxin 19 (CSTX) family. 06 (U6-Lctx) subfamily. In terms of processing, contains 4 disulfide bonds. In terms of tissue distribution, expressed by the venom gland.

It localises to the secreted. The chain is U6-lycotoxin-Ls1d from Lycosa singoriensis (Wolf spider).